The following is a 389-amino-acid chain: Large ribosomal subunit protein uL3 (389 aa).

Belongs to the universal ribosomal protein uL3 family. Component of the large ribosomal subunit. Mature ribosomes consist of a small (40S) and a large (60S) subunit. The 40S subunit contains about 32 different proteins and 1 molecule of RNA (18S). The 60S subunit contains 45 different proteins and 3 molecules of RNA (25S, 5.8S and 5S).

The protein localises to the cytoplasm. Its function is as follows. Component of the ribosome, a large ribonucleoprotein complex responsible for the synthesis of proteins in the cell. The small ribosomal subunit (SSU) binds messenger RNAs (mRNAs) and translates the encoded message by selecting cognate aminoacyl-transfer RNA (tRNA) molecules. The large subunit (LSU) contains the ribosomal catalytic site termed the peptidyl transferase center (PTC), which catalyzes the formation of peptide bonds, thereby polymerizing the amino acids delivered by tRNAs into a polypeptide chain. The nascent polypeptides leave the ribosome through a tunnel in the LSU and interact with protein factors that function in enzymatic processing, targeting, and the membrane insertion of nascent chains at the exit of the ribosomal tunnel. RPL3 plays a role in coordinating processes of accommodating the aminoacyl-tRNA in the PTC. The sequence is that of Large ribosomal subunit protein uL3 from Candida albicans (strain SC5314 / ATCC MYA-2876) (Yeast).